A 331-amino-acid chain; its full sequence is Phosphoenolpyruvate transferase (331 aa).

Asp63 lines the 7,8-didemethyl-8-hydroxy-5-deazariboflavin pocket.

Belongs to the CofD family. In terms of assembly, homodimer. It depends on Mg(2+) as a cofactor.

It catalyses the reaction enolpyruvoyl-2-diphospho-5'-guanosine + 7,8-didemethyl-8-hydroxy-5-deazariboflavin = dehydro coenzyme F420-0 + GMP + H(+). It functions in the pathway cofactor biosynthesis; coenzyme F420 biosynthesis. Its function is as follows. Catalyzes the transfer of the phosphoenolpyruvate moiety from enoylpyruvoyl-2-diphospho-5'-guanosine (EPPG) to 7,8-didemethyl-8-hydroxy-5-deazariboflavin (FO) with the formation of dehydro coenzyme F420-0 and GMP. This chain is Phosphoenolpyruvate transferase, found in Mycobacterium bovis (strain ATCC BAA-935 / AF2122/97).